The sequence spans 71 residues: Phenoloxidase 3 (71 aa).

Cu cation contacts are provided by H3 and H29.

It belongs to the tyrosinase family. Requires Cu(2+) as cofactor. Post-translationally, upon activation, a trypsin type protease cleaves prophenol oxidase to yield the active enzyme. As to expression, hemocytes and plasma.

The protein resides in the secreted. The enzyme catalyses 2 L-dopa + O2 = 2 L-dopaquinone + 2 H2O. It carries out the reaction L-tyrosine + O2 = L-dopaquinone + H2O. This is a copper-containing oxidase that functions in the formation of pigments such as melanins and other polyphenolic compounds. Catalyzes the rate-limiting conversions of tyrosine to DOPA, DOPA to DOPA-quinone and possibly 5,6 dihydroxyindole to indole-5'6 quinone. This is Phenoloxidase 3 from Sarcophaga argyrostoma (Flesh fly).